The primary structure comprises 37 residues: Large ribosomal subunit protein bL36c (37 aa).

Belongs to the bacterial ribosomal protein bL36 family.

Its subcellular location is the plastid. It localises to the chloroplast. This is Large ribosomal subunit protein bL36c from Stigeoclonium helveticum (Green alga).